Here is a 500-residue protein sequence, read N- to C-terminus: Aspartyl/glutamyl-tRNA(Asn/Gln) amidotransferase subunit B (500 aa).

This sequence belongs to the GatB/GatE family. GatB subfamily. In terms of assembly, heterotrimer of A, B and C subunits.

The enzyme catalyses L-glutamyl-tRNA(Gln) + L-glutamine + ATP + H2O = L-glutaminyl-tRNA(Gln) + L-glutamate + ADP + phosphate + H(+). It carries out the reaction L-aspartyl-tRNA(Asn) + L-glutamine + ATP + H2O = L-asparaginyl-tRNA(Asn) + L-glutamate + ADP + phosphate + 2 H(+). Allows the formation of correctly charged Asn-tRNA(Asn) or Gln-tRNA(Gln) through the transamidation of misacylated Asp-tRNA(Asn) or Glu-tRNA(Gln) in organisms which lack either or both of asparaginyl-tRNA or glutaminyl-tRNA synthetases. The reaction takes place in the presence of glutamine and ATP through an activated phospho-Asp-tRNA(Asn) or phospho-Glu-tRNA(Gln). The polypeptide is Aspartyl/glutamyl-tRNA(Asn/Gln) amidotransferase subunit B (Rhizobium johnstonii (strain DSM 114642 / LMG 32736 / 3841) (Rhizobium leguminosarum bv. viciae)).